Consider the following 123-residue polypeptide: Small ribosomal subunit protein uS12 (123 aa).

Residues 1-32 (MPTIQQLVRKGRKTKVSKNKTPALKGSPQRRG) form a disordered region. Residues 9–18 (RKGRKTKVSK) are compositionally biased toward basic residues. Asp89 bears the 3-methylthioaspartic acid mark.

It belongs to the universal ribosomal protein uS12 family. In terms of assembly, part of the 30S ribosomal subunit. Contacts proteins S8 and S17. May interact with IF1 in the 30S initiation complex.

With S4 and S5 plays an important role in translational accuracy. Its function is as follows. Interacts with and stabilizes bases of the 16S rRNA that are involved in tRNA selection in the A site and with the mRNA backbone. Located at the interface of the 30S and 50S subunits, it traverses the body of the 30S subunit contacting proteins on the other side and probably holding the rRNA structure together. The combined cluster of proteins S8, S12 and S17 appears to hold together the shoulder and platform of the 30S subunit. This is Small ribosomal subunit protein uS12 from Thermobifida fusca (strain YX).